Reading from the N-terminus, the 488-residue chain is BTB/POZ domain-containing protein 1 (488 aa).

A compositionally biased stretch (low complexity) spans 1 to 19 (MASLGSAAAGEPATGAEAE). A disordered region spans residues 1–42 (MASLGSAAAGEPATGAEAEPGPPAPPPPPPPPPAPSPSALGP). Residues 20-36 (PGPPAPPPPPPPPPAPS) show a composition bias toward pro residues. The BTB domain occupies 75-151 (SDVRFVLGKG…LYSDEVQIGP (77 aa)). Omega-N-methylarginine is present on Arg-85. One can recognise a BACK domain in the interval 190–290 (LTQARLFDEP…IRFPLMTIEE (101 aa)).

Interacts (via C-terminus) with TOP1. Interacts with TRIM5 isoform Delta. Interacts with CUL3. As to expression, strongly expressed in heart and skeletal muscle. Weakly expressed in myoblast C2C12 cells, but strongly up-regulated upon their differentiation into myotubes.

It is found in the cytoplasm. The protein operates within protein modification; protein ubiquitination. Probable substrate-specific adapter of an E3 ubiquitin-protein ligase complex which mediates the ubiquitination and subsequent proteasomal degradation of target proteins. Seems to regulate expression levels and/or subnuclear distribution of TOP1, via an unknown mechanism. May play a role in mesenchymal differentiation where it promotes myogenic differentiation and suppresses adipogenesis. The protein is BTB/POZ domain-containing protein 1 (Btbd1) of Mus musculus (Mouse).